A 438-amino-acid polypeptide reads, in one-letter code: Elongation factor 1-alpha (438 aa).

Positions 5-228 constitute a tr-type G domain; the sequence is KPHLNLVVIG…ALDSLEPPPK (224 aa). The tract at residues 14–21 is G1; that stretch reads GHVDHGKS. 14-21 contacts GTP; the sequence is GHVDHGKS. Serine 21 is a binding site for Mg(2+). A G2 region spans residues 70 to 74; that stretch reads GVTIA. The G3 stretch occupies residues 91–94; that stretch reads DAPG. GTP is bound by residues 91 to 95 and 153 to 156; these read DAPGH and NKMD. Residues 153-156 are G4; it reads NKMD. Residues 194 to 196 form a G5 region; the sequence is SAW.

This sequence belongs to the TRAFAC class translation factor GTPase superfamily. Classic translation factor GTPase family. EF-Tu/EF-1A subfamily.

The protein localises to the cytoplasm. It carries out the reaction GTP + H2O = GDP + phosphate + H(+). Functionally, GTP hydrolase that promotes the GTP-dependent binding of aminoacyl-tRNA to the A-site of ribosomes during protein biosynthesis. The sequence is that of Elongation factor 1-alpha from Staphylothermus marinus (strain ATCC 43588 / DSM 3639 / JCM 9404 / F1).